We begin with the raw amino-acid sequence, 365 residues long: DNA replication and repair protein RecF (365 aa).

30-37 is an ATP binding site; the sequence is GDNAQGKT.

It belongs to the RecF family.

The protein localises to the cytoplasm. Functionally, the RecF protein is involved in DNA metabolism; it is required for DNA replication and normal SOS inducibility. RecF binds preferentially to single-stranded, linear DNA. It also seems to bind ATP. This Alkaliphilus oremlandii (strain OhILAs) (Clostridium oremlandii (strain OhILAs)) protein is DNA replication and repair protein RecF.